A 340-amino-acid polypeptide reads, in one-letter code: Conidiation-specific protein 13 (340 aa).

Residues 313 to 340 (AEAAAGISSGKPAADRKTKGKKGTKFRV) are disordered. Positions 330–340 (TKGKKGTKFRV) are enriched in basic residues.

The chain is Conidiation-specific protein 13 (con-13) from Neurospora crassa (strain ATCC 24698 / 74-OR23-1A / CBS 708.71 / DSM 1257 / FGSC 987).